A 572-amino-acid chain; its full sequence is Proline--tRNA ligase (572 aa).

It belongs to the class-II aminoacyl-tRNA synthetase family. ProS type 1 subfamily. In terms of assembly, homodimer.

Its subcellular location is the cytoplasm. It catalyses the reaction tRNA(Pro) + L-proline + ATP = L-prolyl-tRNA(Pro) + AMP + diphosphate. In terms of biological role, catalyzes the attachment of proline to tRNA(Pro) in a two-step reaction: proline is first activated by ATP to form Pro-AMP and then transferred to the acceptor end of tRNA(Pro). As ProRS can inadvertently accommodate and process non-cognate amino acids such as alanine and cysteine, to avoid such errors it has two additional distinct editing activities against alanine. One activity is designated as 'pretransfer' editing and involves the tRNA(Pro)-independent hydrolysis of activated Ala-AMP. The other activity is designated 'posttransfer' editing and involves deacylation of mischarged Ala-tRNA(Pro). The misacylated Cys-tRNA(Pro) is not edited by ProRS. The protein is Proline--tRNA ligase of Hydrogenovibrio crunogenus (strain DSM 25203 / XCL-2) (Thiomicrospira crunogena).